A 750-amino-acid chain; its full sequence is Neprilysin (750 aa).

A compositionally biased stretch (polar residues) spans 1 to 14 (MGRSESQMDITDIN). The disordered stretch occupies residues 1–20 (MGRSESQMDITDINTPKPKK). The N-myristoyl glycine moiety is linked to residue G2. At 2 to 28 (GRSESQMDITDINTPKPKKKQRWTPLE) the chain is on the cytoplasmic side. 2 positions are modified to phosphoserine: S4 and S6. Residues 16–23 (PKPKKKQR) carry the Stop-transfer sequence motif. A helical; Signal-anchor for type II membrane protein membrane pass occupies residues 29–51 (ISLSVLVLLLTVIAVTMIALYAT). Over 52–750 (YDDGICKSSD…MNPEKKCRVW (699 aa)) the chain is Extracellular. In terms of domain architecture, Peptidase M13 spans 56–750 (ICKSSDCIKS…MNPEKKCRVW (695 aa)). Disulfide bonds link C57/C62, C80/C735, C88/C695, C143/C411, C234/C242, and C621/C747. R103 serves as a coordination point for a peptide. Residue N145 is glycosylated (N-linked (GlcNAc...) asparagine). N-linked (GlcNAc...) asparagine glycans are attached at residues N285, N311, and N325. H584 contacts Zn(2+). Residue E585 is part of the active site. H588 lines the Zn(2+) pocket. Residue N628 is glycosylated (N-linked (GlcNAc...) asparagine). A Zn(2+)-binding site is contributed by E647. Residue D651 is the Proton donor of the active site.

The protein belongs to the peptidase M13 family. The cofactor is Zn(2+). In terms of processing, myristoylation is a determinant of membrane targeting. Glycosylation at Asn-628 is necessary both for surface expression and neutral endopeptidase activity.

It is found in the cell membrane. The enzyme catalyses Preferential cleavage of polypeptides between hydrophobic residues, particularly with Phe or Tyr at P1'.. It carries out the reaction substance P + H2O = substance P(1-9) + L-Leu-L-Met-NH2. The catalysed reaction is substance P + H2O = substance P(1-7) + L-Phe-Gly-L-Leu-L-Met-NH2. It catalyses the reaction neurotensin + H2O = neurotensin(1-11) + L-isoleucyl-L-leucine. The enzyme catalyses neurotensin + H2O = neurotensin(1-10) + L-tyrosyl-L-isoleucyl-L-leucine. Its activity is regulated as follows. Inhibited by mixanpril, an orally-active drug used for the treatment of hypertension. Functionally, thermolysin-like specificity, but is almost confined on acting on polypeptides of up to 30 amino acids. Biologically important in the destruction of opioid peptides such as Met- and Leu-enkephalins by cleavage of a Gly-Phe bond. Catalyzes cleavage of bradykinin, substance P and neurotensin peptides. Able to cleave angiotensin-1, angiotensin-2 and angiotensin 1-9. Involved in the degradation of atrial natriuretic factor (ANF) and brain natriuretic factor (BNP(1-32)). Displays UV-inducible elastase activity toward skin preelastic and elastic fibers. This is Neprilysin (MME) from Oryctolagus cuniculus (Rabbit).